We begin with the raw amino-acid sequence, 230 residues long: Sugar fermentation stimulation protein homolog (230 aa).

It belongs to the SfsA family.

This chain is Sugar fermentation stimulation protein homolog, found in Clostridium botulinum (strain Alaska E43 / Type E3).